The following is a 201-amino-acid chain: 3-isopropylmalate dehydratase small subunit (201 aa).

Belongs to the LeuD family. LeuD type 1 subfamily. Heterodimer of LeuC and LeuD.

The catalysed reaction is (2R,3S)-3-isopropylmalate = (2S)-2-isopropylmalate. Its pathway is amino-acid biosynthesis; L-leucine biosynthesis; L-leucine from 3-methyl-2-oxobutanoate: step 2/4. Catalyzes the isomerization between 2-isopropylmalate and 3-isopropylmalate, via the formation of 2-isopropylmaleate. This is 3-isopropylmalate dehydratase small subunit from Agrobacterium fabrum (strain C58 / ATCC 33970) (Agrobacterium tumefaciens (strain C58)).